The primary structure comprises 337 residues: Putative carboxypeptidase TP_0688 (337 aa).

Ser118 acts as the Nucleophile in catalysis. Active-site charge relay system residues include Glu234 and His302.

This sequence belongs to the peptidase S66 family.

In Treponema pallidum (strain Nichols), this protein is Putative carboxypeptidase TP_0688.